The chain runs to 574 residues: Glutamate--tRNA ligase (574 aa).

The short motif at 109-119 (PNPDFVIHMGN) is the 'HIGH' region element.

Belongs to the class-I aminoacyl-tRNA synthetase family. Glutamate--tRNA ligase type 2 subfamily.

Its subcellular location is the cytoplasm. The enzyme catalyses tRNA(Glu) + L-glutamate + ATP = L-glutamyl-tRNA(Glu) + AMP + diphosphate. Functionally, catalyzes the attachment of glutamate to tRNA(Glu) in a two-step reaction: glutamate is first activated by ATP to form Glu-AMP and then transferred to the acceptor end of tRNA(Glu). This Aeropyrum pernix (strain ATCC 700893 / DSM 11879 / JCM 9820 / NBRC 100138 / K1) protein is Glutamate--tRNA ligase.